We begin with the raw amino-acid sequence, 252 residues long: Imidazole glycerol phosphate synthase subunit HisF (252 aa).

Residues D11 and D130 contribute to the active site.

Belongs to the HisA/HisF family. As to quaternary structure, heterodimer of HisH and HisF.

Its subcellular location is the cytoplasm. It catalyses the reaction 5-[(5-phospho-1-deoxy-D-ribulos-1-ylimino)methylamino]-1-(5-phospho-beta-D-ribosyl)imidazole-4-carboxamide + L-glutamine = D-erythro-1-(imidazol-4-yl)glycerol 3-phosphate + 5-amino-1-(5-phospho-beta-D-ribosyl)imidazole-4-carboxamide + L-glutamate + H(+). It participates in amino-acid biosynthesis; L-histidine biosynthesis; L-histidine from 5-phospho-alpha-D-ribose 1-diphosphate: step 5/9. In terms of biological role, IGPS catalyzes the conversion of PRFAR and glutamine to IGP, AICAR and glutamate. The HisF subunit catalyzes the cyclization activity that produces IGP and AICAR from PRFAR using the ammonia provided by the HisH subunit. The polypeptide is Imidazole glycerol phosphate synthase subunit HisF (Dictyoglomus turgidum (strain DSM 6724 / Z-1310)).